Reading from the N-terminus, the 189-residue chain is Putative ankyrin repeat protein L38 (189 aa).

An ANK repeat occupies 108–137; sequence YGKTPLITAIKSGNCIMVKKLIDYGADFNK.

The chain is Putative ankyrin repeat protein L38 from Acanthamoeba polyphaga mimivirus (APMV).